The sequence spans 223 residues: Urease accessory protein UreF (223 aa).

This sequence belongs to the UreF family. UreD, UreF and UreG form a complex that acts as a GTP-hydrolysis-dependent molecular chaperone, activating the urease apoprotein by helping to assemble the nickel containing metallocenter of UreC. The UreE protein probably delivers the nickel.

The protein localises to the cytoplasm. Its function is as follows. Required for maturation of urease via the functional incorporation of the urease nickel metallocenter. This is Urease accessory protein UreF from Rhizobium etli (strain CIAT 652).